The following is a 527-amino-acid chain: MSYPLEEVNKRRTFAIISHPDAGKTTITEKVLLYGNAIQTAGSVKGKGSAAHAKSDWMEMEKQRGISITTSVMQFPYNDCLVNLLDTPGHEDFSEDTYRTLTAVDSCLMVIDSAKGVEERTIKLMEVTRLRDTPIITFMNKLDRDIRDPMELLDEVENVLKIRCAPITWPIGCGKLFKGVYHLAKDETYLYQSGQGSTIQAVRVVKGLNNPELDVAVGDDLAQQLRDELELVQGASNEFEQDAFIKGELTPVFFGTALGNFGVDHFLDGLTQWAPKPQSRQADTRTVESAEEKFSGFVFKIQANMDPKHRDRVAFMRVVSGKYEKGMKLKHVRIGKDVVISDALTFMAGDRAHAEEAYAGDIIGLHNHGTIQIGDTFTQGETLKFTGIPNFAPELFRRIRLKDPLKQKQLLKGLVQLSEEGAVQVFRPLLNNDLIVGAVGVLQFDVVVSRLKTEYNVEAIYENVNVATARWVECADGKKFEEFKRKNEQNLALDGGDNLTYIAPTMVNLNLAQERYPDVVFYKTREH.

One can recognise a tr-type G domain in the interval 9 to 278 (NKRRTFAIIS…GLTQWAPKPQ (270 aa)). GTP is bound by residues 18–25 (SHPDAGKT), 86–90 (DTPGH), and 140–143 (NKLD).

The protein belongs to the TRAFAC class translation factor GTPase superfamily. Classic translation factor GTPase family. PrfC subfamily.

It localises to the cytoplasm. Functionally, increases the formation of ribosomal termination complexes and stimulates activities of RF-1 and RF-2. It binds guanine nucleotides and has strong preference for UGA stop codons. It may interact directly with the ribosome. The stimulation of RF-1 and RF-2 is significantly reduced by GTP and GDP, but not by GMP. The chain is Peptide chain release factor 3 from Haemophilus influenzae (strain PittGG).